A 129-amino-acid polypeptide reads, in one-letter code: Large ribosomal subunit protein bL17 (129 aa).

Belongs to the bacterial ribosomal protein bL17 family. In terms of assembly, part of the 50S ribosomal subunit. Contacts protein L32.

This Pasteurella multocida (strain Pm70) protein is Large ribosomal subunit protein bL17.